Reading from the N-terminus, the 480-residue chain is ATP synthase subunit beta (480 aa).

153-160 contributes to the ATP binding site; that stretch reads GGAGVGKT.

Belongs to the ATPase alpha/beta chains family. As to quaternary structure, F-type ATPases have 2 components, CF(1) - the catalytic core - and CF(0) - the membrane proton channel. CF(1) has five subunits: alpha(3), beta(3), gamma(1), delta(1), epsilon(1). CF(0) has three main subunits: a(1), b(2) and c(9-12). The alpha and beta chains form an alternating ring which encloses part of the gamma chain. CF(1) is attached to CF(0) by a central stalk formed by the gamma and epsilon chains, while a peripheral stalk is formed by the delta and b chains.

It is found in the cell membrane. It catalyses the reaction ATP + H2O + 4 H(+)(in) = ADP + phosphate + 5 H(+)(out). Its function is as follows. Produces ATP from ADP in the presence of a proton gradient across the membrane. The catalytic sites are hosted primarily by the beta subunits. The protein is ATP synthase subunit beta of Lactobacillus johnsonii (strain CNCM I-12250 / La1 / NCC 533).